Reading from the N-terminus, the 381-residue chain is 1-deoxy-D-xylulose 5-phosphate reductoisomerase (381 aa).

The NADPH site is built by glycine 13, serine 14, isoleucine 15, asparagine 40, and asparagine 114. Residue lysine 115 coordinates 1-deoxy-D-xylulose 5-phosphate. An NADPH-binding site is contributed by glutamate 116. Residue aspartate 140 coordinates Mn(2+). 4 residues coordinate 1-deoxy-D-xylulose 5-phosphate: serine 141, glutamate 142, serine 166, and histidine 189. Glutamate 142 contributes to the Mn(2+) binding site. Glycine 195 is a binding site for NADPH. Residues serine 202, asparagine 207, lysine 208, and glutamate 211 each coordinate 1-deoxy-D-xylulose 5-phosphate. Glutamate 211 contacts Mn(2+).

Belongs to the DXR family. Mg(2+) serves as cofactor. Mn(2+) is required as a cofactor.

It catalyses the reaction 2-C-methyl-D-erythritol 4-phosphate + NADP(+) = 1-deoxy-D-xylulose 5-phosphate + NADPH + H(+). The protein operates within isoprenoid biosynthesis; isopentenyl diphosphate biosynthesis via DXP pathway; isopentenyl diphosphate from 1-deoxy-D-xylulose 5-phosphate: step 1/6. Functionally, catalyzes the NADPH-dependent rearrangement and reduction of 1-deoxy-D-xylulose-5-phosphate (DXP) to 2-C-methyl-D-erythritol 4-phosphate (MEP). This chain is 1-deoxy-D-xylulose 5-phosphate reductoisomerase, found in Treponema denticola (strain ATCC 35405 / DSM 14222 / CIP 103919 / JCM 8153 / KCTC 15104).